Here is a 407-residue protein sequence, read N- to C-terminus: Polygalacturonase (407 aa).

Residues 1 to 26 form the signal peptide; that stretch reads MAPHLNIVPSMFVLLLLFISASKVQP. 2 PbH1 repeats span residues 180–206 and 207–228; these read CKNITLERLKIEAPDESPNTDGIHMGK and SEGVNIIASDIKTGDDCISIGD. N-linked (GlcNAc...) asparagine glycosylation is present at N182. Residue D221 is the Proton donor of the active site. An intrachain disulfide couples C223 to C240. The active site involves H244. 2 PbH1 repeats span residues 260–281 and 290–311; these read VEGIKISNCTITNTSNGARIKT and VSEIHFEDITMNNVSSPILIDQ. N-linked (GlcNAc...) asparagine glycans are attached at residues N267, N272, N302, and N331. 2 disulfides stabilise this stretch: C351/C357 and C379/C395. The PbH1 5 repeat unit spans residues 357–384; sequence CQNVELADIDIQHNGAEPATSQCLNVKP.

The protein belongs to the glycosyl hydrolase 28 family. In terms of tissue distribution, pollen.

It localises to the secreted. It is found in the cell wall. It catalyses the reaction (1,4-alpha-D-galacturonosyl)n+m + H2O = (1,4-alpha-D-galacturonosyl)n + (1,4-alpha-D-galacturonosyl)m.. In terms of biological role, may function in the depolymerization of the pectin in its walls during pollen tube elongation, or in that of the pistil during pollination. This chain is Polygalacturonase (G9), found in Gossypium barbadense (Sea Island cotton).